The chain runs to 214 residues: Rhodanese-like domain-containing protein 10 (214 aa).

Positions 58 to 182 (ASEGYILLDV…VSEGDFPEIE (125 aa)) constitute a Rhodanese domain. The Cysteine persulfide intermediate role is filled by Cys142. A helical transmembrane segment spans residues 190–206 (ATIGGVSFYLLKLLVLL).

It localises to the membrane. The protein is Rhodanese-like domain-containing protein 10 (STR10) of Arabidopsis thaliana (Mouse-ear cress).